Here is a 257-residue protein sequence, read N- to C-terminus: Imidazole glycerol phosphate synthase subunit HisF (257 aa).

Residues D12 and D131 contribute to the active site.

The protein belongs to the HisA/HisF family. In terms of assembly, heterodimer of HisH and HisF.

It localises to the cytoplasm. The catalysed reaction is 5-[(5-phospho-1-deoxy-D-ribulos-1-ylimino)methylamino]-1-(5-phospho-beta-D-ribosyl)imidazole-4-carboxamide + L-glutamine = D-erythro-1-(imidazol-4-yl)glycerol 3-phosphate + 5-amino-1-(5-phospho-beta-D-ribosyl)imidazole-4-carboxamide + L-glutamate + H(+). Its pathway is amino-acid biosynthesis; L-histidine biosynthesis; L-histidine from 5-phospho-alpha-D-ribose 1-diphosphate: step 5/9. Its function is as follows. IGPS catalyzes the conversion of PRFAR and glutamine to IGP, AICAR and glutamate. The HisF subunit catalyzes the cyclization activity that produces IGP and AICAR from PRFAR using the ammonia provided by the HisH subunit. In Cellvibrio japonicus (strain Ueda107) (Pseudomonas fluorescens subsp. cellulosa), this protein is Imidazole glycerol phosphate synthase subunit HisF.